The chain runs to 428 residues: Cyclic AMP-responsive element-binding protein 3-like protein 3-B (428 aa).

At 1 to 286 (MDHYSDQGGD…VMNGSNKPVQ (286 aa)) the chain is on the cytoplasmic side. Residues 67 to 83 (VSGSPVWSPSPSDSGIS) are compositionally biased toward low complexity. The segment at 67–104 (VSGSPVWSPSPSDSGISEDPHSDHIDSPPPNASPPMEP) is disordered. The segment covering 93–103 (SPPPNASPPME) has biased composition (pro residues). A bZIP domain is found at 210 to 273 (ILKKIRRKIR…ISLMEQLRRL (64 aa)). Residues 212-241 (KKIRRKIRNKQSAQESRKKKKEYIDGLESR) form a basic motif region. Residues 252 to 273 (LQRKVFQLEKCNISLMEQLRRL) are leucine-zipper. Residues 287 to 303 (AGTCVLVLLLSFTLILL) traverse the membrane as a helical; Signal-anchor for type II membrane protein segment. The Lumenal portion of the chain corresponds to 304–428 (PNLKPFTDTK…SRRSPHADDM (125 aa)). A disordered region spans residues 381–428 (TEYDPESHNHSFDQHDEHHHGDPITGHVATVTLNPRRGSRRSPHADDM). A compositionally biased stretch (basic and acidic residues) spans 385–402 (PESHNHSFDQHDEHHHGD). An N-linked (GlcNAc...) asparagine glycan is attached at Asn389.

It belongs to the bZIP family. ATF subfamily. In terms of assembly, binds DNA as a dimer. In terms of processing, controlled by regulated intramembrane proteolysis (RIP). A fragment containing the cytoplasmic transcription factor domain is released by proteolysis. The cleavage seems to be performed sequentially by site-1 and site-2 proteases.

The protein localises to the endoplasmic reticulum membrane. Its subcellular location is the nucleus. In terms of biological role, transcriptional activator. Binds the cAMP response element (CRE). Activates transcription through box-B element and CRE. Seems to function synergistically with atf6. Regulates FGF21 transcription. The chain is Cyclic AMP-responsive element-binding protein 3-like protein 3-B (creb3l3b) from Danio rerio (Zebrafish).